A 266-amino-acid chain; its full sequence is Vitamin B12-binding protein (266 aa).

Residues 1 to 22 form the signal peptide; it reads MVKQMFRALVALLLTLPVWLYA. The Fe/B12 periplasmic-binding domain maps to 25–266; sequence RVITLSPANT…QLCNALSQVN (242 aa). Cyanocob(III)alamin contacts are provided by residues Y50 and 242 to 246; that span reads DWFER. A disulfide bridge connects residues C183 and C259.

The protein belongs to the BtuF family. As to quaternary structure, the complex is composed of two ATP-binding proteins (BtuD), two transmembrane proteins (BtuC) and a solute-binding protein (BtuF).

It localises to the periplasm. Part of the ABC transporter complex BtuCDF involved in vitamin B12 import. Binds vitamin B12 and delivers it to the periplasmic surface of BtuC. This chain is Vitamin B12-binding protein, found in Salmonella choleraesuis (strain SC-B67).